Here is a 171-residue protein sequence, read N- to C-terminus: NADH-quinone oxidoreductase subunit I 1 (171 aa).

4Fe-4S ferredoxin-type domains lie at 39 to 71 (IVLT…LTKA) and 81 to 110 (EHFR…LTPD). Residues Cys51, Cys54, Cys57, Cys61, Cys90, Cys93, Cys96, and Cys100 each coordinate [4Fe-4S] cluster.

The protein belongs to the complex I 23 kDa subunit family. NDH-1 is composed of 14 different subunits. Subunits NuoA, H, J, K, L, M, N constitute the membrane sector of the complex. [4Fe-4S] cluster is required as a cofactor.

It is found in the cell inner membrane. The enzyme catalyses a quinone + NADH + 5 H(+)(in) = a quinol + NAD(+) + 4 H(+)(out). Its function is as follows. NDH-1 shuttles electrons from NADH, via FMN and iron-sulfur (Fe-S) centers, to quinones in the respiratory chain. The immediate electron acceptor for the enzyme in this species is believed to be ubiquinone. Couples the redox reaction to proton translocation (for every two electrons transferred, four hydrogen ions are translocated across the cytoplasmic membrane), and thus conserves the redox energy in a proton gradient. The polypeptide is NADH-quinone oxidoreductase subunit I 1 (Rhodopseudomonas palustris (strain BisB5)).